The following is a 290-amino-acid chain: Nucleotide-binding protein BPP4038 (290 aa).

Position 9 to 16 (9 to 16) interacts with ATP; it reads GISGSGKS. GTP is bound at residue 58–61; sequence DVRS.

This sequence belongs to the RapZ-like family.

Displays ATPase and GTPase activities. The sequence is that of Nucleotide-binding protein BPP4038 from Bordetella parapertussis (strain 12822 / ATCC BAA-587 / NCTC 13253).